The sequence spans 115 residues: NADH-ubiquinone oxidoreductase chain 3 (115 aa).

The next 3 membrane-spanning stretches (helical) occupy residues 3–23 (LMLVLLINTTISLVLVTIAFW), 55–75 (FFLVAITFLLFDLEIALLLPL), and 87–107 (VLIMALMLISILALGLAYEWI).

Belongs to the complex I subunit 3 family. In terms of assembly, core subunit of respiratory chain NADH dehydrogenase (Complex I) which is composed of 45 different subunits. Interacts with TMEM186. Interacts with TMEM242.

It localises to the mitochondrion inner membrane. It carries out the reaction a ubiquinone + NADH + 5 H(+)(in) = a ubiquinol + NAD(+) + 4 H(+)(out). Its function is as follows. Core subunit of the mitochondrial membrane respiratory chain NADH dehydrogenase (Complex I) which catalyzes electron transfer from NADH through the respiratory chain, using ubiquinone as an electron acceptor. Essential for the catalytic activity of complex I. The sequence is that of NADH-ubiquinone oxidoreductase chain 3 from Oryctolagus cuniculus (Rabbit).